A 149-amino-acid polypeptide reads, in one-letter code: Ribonuclease-like 3 (149 aa).

Residues 1–22 form the signal peptide; the sequence is MGIHQCTAVVLLLLCASLSTYG. Gln-23 carries the post-translational modification Pyrrolidone carboxylic acid. His-38 acts as the Proton acceptor in catalysis. Disulfide bonds link Cys-48–Cys-109, Cys-66–Cys-120, and Cys-84–Cys-135. 67–71 is a binding site for substrate; sequence KEVNT. His-142 serves as the catalytic Proton donor.

This sequence belongs to the pancreatic ribonuclease family. In terms of processing, cleavage between Arg-55 and Arg-56 is catalyzed by a membrane-localized Gram-negative bacterium protease (OmpT in E.coli). The excised fragment is then transported to the bacterium cytosol for cleavage of the disulfide bridge linking Cys-48 and Cys-109, thus separating the N-terminal and LF-ZF3. LF-ZF3 but not the N-terminal peptide possesses bactericidal activity. In terms of tissue distribution, strongly expressed in the adult liver and gut, and weakly in the heart and testis.

The protein localises to the secreted. Ribonuclease. Angiogenic. Plays a role in host defense. Exhibits strong antibacterial activity against Gram-negative bacteria but mild antibacterial activity against Gram-positive bacteria. The RNase activity is not required for the bactericidal activity. This chain is Ribonuclease-like 3, found in Danio rerio (Zebrafish).